Consider the following 1829-residue polypeptide: DNA polymerase (1829 aa).

DOD-type homing endonuclease domains follow at residues 527-668 (LSGI…SLGI) and 1136-1269 (FLGY…SLGV).

It belongs to the DNA polymerase type-B family. In terms of processing, this protein undergoes a protein self splicing that involves a post-translational excision of the three intervening regions (inteins) followed by peptide ligation.

It catalyses the reaction DNA(n) + a 2'-deoxyribonucleoside 5'-triphosphate = DNA(n+1) + diphosphate. In Thermococcus aggregans, this protein is DNA polymerase (pol).